Here is a 631-residue protein sequence, read N- to C-terminus: Chaperone protein DnaK (631 aa).

A Phosphothreonine; by autocatalysis modification is found at Thr197. Positions 598–631 are disordered; sequence MYKKEQGQTGGTEQGGTEQKKSGGDDDVIDAEVE. The segment covering 622–631 has biased composition (acidic residues); that stretch reads DDDVIDAEVE.

This sequence belongs to the heat shock protein 70 family.

In terms of biological role, acts as a chaperone. This is Chaperone protein DnaK from Nitratiruptor sp. (strain SB155-2).